We begin with the raw amino-acid sequence, 421 residues long: Protein HOMOLOG OF MAMMALIAN LYST-INTERACTING PROTEIN 5 (421 aa).

Serine 2 bears the N-acetylserine mark. The disordered stretch occupies residues 146 to 374 (IKEGRKPTPG…KYHYDSSYQP (229 aa)). Positions 165–185 (SIPSSGPSGSYDHSASDTNTT) are enriched in polar residues. A compositionally biased stretch (basic and acidic residues) spans 188–207 (HRTELDPPHDSNDDSSHHQF). Residues 245 to 258 (LPPPTGPSDSPYPH) are compositionally biased toward pro residues. Polar residues predominate over residues 278–293 (NYSSHEPSPNSLPNFQ). Low complexity-rich tracts occupy residues 294–308 (SYPS…STSP) and 317–337 (PEPY…SFSS).

Belongs to the VTA1 family. As to quaternary structure, homodimer. Interacts with SKD1/VPS4, VPS60-1, CHMP1A and CHMP1B. Binds to PROS/At4g24370. Interacts with MPK6 and MPK3. In terms of processing, phosphorylated by activated MPK6 and MPK3, this activation is required to trigger multivesicular bodies (MVBs) trafficking upon plant infection.

Its subcellular location is the cytoplasm. It is found in the endosome membrane. The protein resides in the nucleus. It localises to the endosome. The protein localises to the multivesicular body. Functionally, involved in the endosomal multivesicular bodies (MVB) pathway. MVBs contain intraluminal vesicles (ILVs) that are generated by invagination and scission from the limiting membrane of the endosome and are delivered to lysosomes enabling degradation of membrane proteins. Thought to be a cofactor of SKD1/VPS4, which catalyzes the disassembly of membrane-associated ESCRT-III. Target of pathogen-responsive mitogen-activated protein kinases (MPKs) that plays a critical role in plant basal resistance to Pseudomonas syringae in a SKD1-dependent manner by promoting multivesicular bodies (MVBs) trafficking upon plant infection. The chain is Protein HOMOLOG OF MAMMALIAN LYST-INTERACTING PROTEIN 5 from Arabidopsis thaliana (Mouse-ear cress).